The following is a 52-amino-acid chain: Photosystem II reaction center protein M (52 aa).

The helical transmembrane segment at 6-26 threads the bilayer; it reads FGFAASLLFVGVPTIFLIGLF. The segment at 31 to 52 is disordered; it reads DGEKSSFYSDTSKGRLSPEPKK. Over residues 42–52 the composition is skewed to basic and acidic residues; sequence SKGRLSPEPKK.

It belongs to the PsbM family. PSII is composed of 1 copy each of membrane proteins PsbA, PsbB, PsbC, PsbD, PsbE, PsbF, PsbH, PsbI, PsbJ, PsbK, PsbL, PsbM, PsbT, PsbX, PsbY, Psb30/Ycf12, peripheral proteins PsbO, CyanoQ (PsbQ), PsbU, PsbV and a large number of cofactors. It forms dimeric complexes.

It localises to the cellular thylakoid membrane. One of the components of the core complex of photosystem II (PSII). PSII is a light-driven water:plastoquinone oxidoreductase that uses light energy to abstract electrons from H(2)O, generating O(2) and a proton gradient subsequently used for ATP formation. It consists of a core antenna complex that captures photons, and an electron transfer chain that converts photonic excitation into a charge separation. This subunit is found at the monomer-monomer interface. The polypeptide is Photosystem II reaction center protein M (Prochlorococcus marinus (strain NATL1A)).